Here is a 120-residue protein sequence, read N- to C-terminus: Large ribosomal subunit protein bL19c (120 aa).

This sequence belongs to the bacterial ribosomal protein bL19 family.

It is found in the plastid. The protein localises to the chloroplast. The protein is Large ribosomal subunit protein bL19c of Thalassiosira weissflogii (Marine diatom).